The sequence spans 255 residues: Flagellar brake protein YcgR (255 aa).

The 119-residue stretch at 122-240 (QRRTYFRINT…ERDLQQVIFE (119 aa)) folds into the PilZ domain.

This sequence belongs to the YcgR family. As to quaternary structure, monomer. Interacts with the flagellar basal bodies.

Its subcellular location is the bacterial flagellum basal body. Acts as a flagellar brake, regulating swimming and swarming in a bis-(3'-5') cyclic diguanylic acid (c-di-GMP)-dependent manner. Binds 1 c-di-GMP dimer per subunit. Increasing levels of c-di-GMP lead to decreased motility. This Pectobacterium carotovorum subsp. carotovorum (strain PC1) protein is Flagellar brake protein YcgR.